The primary structure comprises 67 residues: DNA-directed RNA polymerase subunit omega (67 aa).

Belongs to the RNA polymerase subunit omega family. As to quaternary structure, the RNAP catalytic core consists of 2 alpha, 1 beta, 1 beta' and 1 omega subunit. When a sigma factor is associated with the core the holoenzyme is formed, which can initiate transcription.

The catalysed reaction is RNA(n) + a ribonucleoside 5'-triphosphate = RNA(n+1) + diphosphate. Promotes RNA polymerase assembly. Latches the N- and C-terminal regions of the beta' subunit thereby facilitating its interaction with the beta and alpha subunits. The chain is DNA-directed RNA polymerase subunit omega from Bacillus velezensis (strain DSM 23117 / BGSC 10A6 / LMG 26770 / FZB42) (Bacillus amyloliquefaciens subsp. plantarum).